Reading from the N-terminus, the 270-residue chain is Glucosamine-6-phosphate deaminase (270 aa).

Asp72 functions as the Proton acceptor; for enolization step in the catalytic mechanism. Catalysis depends on Asp141, which acts as the For ring-opening step. The active-site Proton acceptor; for ring-opening step is His143. Catalysis depends on Glu148, which acts as the For ring-opening step.

The protein belongs to the glucosamine/galactosamine-6-phosphate isomerase family. NagB subfamily.

It catalyses the reaction alpha-D-glucosamine 6-phosphate + H2O = beta-D-fructose 6-phosphate + NH4(+). The protein operates within amino-sugar metabolism; N-acetylneuraminate degradation; D-fructose 6-phosphate from N-acetylneuraminate: step 5/5. With respect to regulation, allosterically activated by N-acetylglucosamine 6-phosphate (GlcNAc6P). Its function is as follows. Catalyzes the reversible isomerization-deamination of glucosamine 6-phosphate (GlcN6P) to form fructose 6-phosphate (Fru6P) and ammonium ion. The chain is Glucosamine-6-phosphate deaminase from Parabacteroides distasonis (strain ATCC 8503 / DSM 20701 / CIP 104284 / JCM 5825 / NCTC 11152).